The primary structure comprises 452 residues: Cobyrinate a,c-diamide synthase (452 aa).

A GATase cobBQ-type domain is found at 248 to 441 (RVAYALDAAF…LHIHFYQNLL (194 aa)). The active-site Nucleophile is Cys-330.

The protein belongs to the CobB/CbiA family. Requires Mg(2+) as cofactor.

It carries out the reaction cob(II)yrinate + 2 L-glutamine + 2 ATP + 2 H2O = cob(II)yrinate a,c diamide + 2 L-glutamate + 2 ADP + 2 phosphate + 2 H(+). It functions in the pathway cofactor biosynthesis; adenosylcobalamin biosynthesis; cob(II)yrinate a,c-diamide from sirohydrochlorin (anaerobic route): step 10/10. Functionally, catalyzes the ATP-dependent amidation of the two carboxylate groups at positions a and c of cobyrinate, using either L-glutamine or ammonia as the nitrogen source. This is Cobyrinate a,c-diamide synthase from Listeria monocytogenes serotype 4b (strain F2365).